Consider the following 159-residue polypeptide: Phosphopantetheine adenylyltransferase (159 aa).

Serine 9 lines the substrate pocket. ATP-binding positions include 9–10 (SF) and histidine 17. Substrate-binding residues include lysine 41, leucine 73, and lysine 87. ATP is bound by residues 88–90 (GLR), glutamate 98, and 122–128 (YSFLSSS).

This sequence belongs to the bacterial CoaD family. As to quaternary structure, homohexamer. Mg(2+) is required as a cofactor.

It localises to the cytoplasm. It carries out the reaction (R)-4'-phosphopantetheine + ATP + H(+) = 3'-dephospho-CoA + diphosphate. It participates in cofactor biosynthesis; coenzyme A biosynthesis; CoA from (R)-pantothenate: step 4/5. Its function is as follows. Reversibly transfers an adenylyl group from ATP to 4'-phosphopantetheine, yielding dephospho-CoA (dPCoA) and pyrophosphate. This Streptomyces avermitilis (strain ATCC 31267 / DSM 46492 / JCM 5070 / NBRC 14893 / NCIMB 12804 / NRRL 8165 / MA-4680) protein is Phosphopantetheine adenylyltransferase.